A 210-amino-acid polypeptide reads, in one-letter code: SAP domain-containing ribonucleoprotein (210 aa).

N-acetylalanine is present on alanine 2. Residues 8–42 enclose the SAP domain; it reads LHKLKLAELKQECLARGLETKGIKQDLINRLQAYL. An N6-acetyllysine modification is found at lysine 10. Residues 45–64 show a composition bias toward acidic residues; that stretch reads HAEEEANEEDVLGDETEEEE. The interval 45–87 is disordered; sequence HAEEEANEEDVLGDETEEEEPKPIELPVKEEEPPEKAVDMASE. Positions 65–87 are enriched in basic and acidic residues; sequence PKPIELPVKEEEPPEKAVDMASE. Position 142 is an N6-acetyllysine (lysine 142). The segment at 162–210 is disordered; it reads SSISRKSEDDEKLKKRKERFGIVTSSAGTGTTEDTEAKKRKRAERFGIA. At serine 163 the chain carries Phosphoserine. Polar residues predominate over residues 184–193; the sequence is VTSSAGTGTT.

It belongs to the SAP domain-containing ribonucleoprotein family. As to quaternary structure, interacts with DDX39A. Interacts with FUS. Interacts (via the C-terminal domain) with DDX39B; the interaction is direct and facilitates RNA binding of DDX39B. Component of the transcription/export (TREX) complex at least composed of ALYREF/THOC4, DDX39B, SARNP/CIP29, CHTOP and the THO subcomplex; TREX seems to have dynamic structure involving ATP-dependent remodeling; in the complex interacts directly with DDX39B in a ATP-dependent manner which bridges it to ALYREF/THOC4.

It is found in the nucleus. The protein localises to the nucleus speckle. Functionally, binds both single-stranded and double-stranded DNA with higher affinity for the single-stranded form. Specifically binds to scaffold/matrix attachment region DNA. Also binds single-stranded RNA. Enhances RNA unwinding activity of DDX39A. May participate in important transcriptional or translational control of cell growth, metabolism and carcinogenesis. Component of the TREX complex which is thought to couple mRNA transcription, processing and nuclear export, and specifically associates with spliced mRNA and not with unspliced pre-mRNA. The TREX complex is recruited to spliced mRNAs by a transcription-independent mechanism, binds to mRNA upstream of the exon-junction complex (EJC) and is recruited in a splicing- and cap-dependent manner to a region near the 5' end of the mRNA where it functions in mRNA export to the cytoplasm via the TAP/NXF1 pathway. Associates with DDX39B, which facilitates RNA binding of DDX39B and likely plays a role in mRNA export. In Mus musculus (Mouse), this protein is SAP domain-containing ribonucleoprotein (Sarnp).